Here is a 202-residue protein sequence, read N- to C-terminus: CASP-like protein 1E1 (202 aa).

Topologically, residues 1 to 33 (MESQCRPNVDGVHNGVESHVKVVEKPRSVGSSS) are cytoplasmic. The helical transmembrane segment at 34-54 (EFVLRILGLLLTLIAAVVAGV) threads the bilayer. The Extracellular portion of the chain corresponds to 55-85 (DKQTKIIPLTLIKTLPSLHVPVTAKWSDMSA). Residues 86 to 106 (FVYLVVSNAIACSYAAISLVL) traverse the membrane as a helical segment. Residues 107-118 (VTMLGRRGKGGR) lie on the Cytoplasmic side of the membrane. Residues 119–139 (VLAVIVLDLHMVGLLFSANGA) form a helical membrane-spanning segment. Residues 140 to 172 (ATAVGVLGQYGNSHVEWKKVCNVFDSFCHHLVA) lie on the Extracellular side of the membrane. Residues 173–193 (SLALSFLGSLSFLGLVLLAIL) traverse the membrane as a helical segment. Topologically, residues 194 to 202 (NLHKKSSTK) are cytoplasmic.

It belongs to the Casparian strip membrane proteins (CASP) family. In terms of assembly, homodimer and heterodimers.

The protein resides in the cell membrane. This Vitis vinifera (Grape) protein is CASP-like protein 1E1.